Here is a 282-residue protein sequence, read N- to C-terminus: HTH-type transcriptional activator RhaR (282 aa).

The region spanning 179–277 (DKLITRLAAS…GMTPSQWRHL (99 aa)) is the HTH araC/xylS-type domain. 2 DNA-binding regions (H-T-H motif) span residues 196–217 (DKFC…RQQT) and 244–267 (ISDI…TRET).

As to quaternary structure, binds DNA as a dimer.

The protein localises to the cytoplasm. In terms of biological role, activates expression of the rhaSR operon in response to L-rhamnose. The chain is HTH-type transcriptional activator RhaR from Escherichia coli O139:H28 (strain E24377A / ETEC).